A 198-amino-acid polypeptide reads, in one-letter code: Recombination protein RecR (198 aa).

The segment at 57 to 72 (CSVCGHITDKDPCYIC) adopts a C4-type zinc-finger fold. In terms of domain architecture, Toprim spans 80 to 175 (SVICVVQESK…KVTRIAHGLP (96 aa)).

Belongs to the RecR family.

In terms of biological role, may play a role in DNA repair. It seems to be involved in an RecBC-independent recombinational process of DNA repair. It may act with RecF and RecO. The protein is Recombination protein RecR of Listeria monocytogenes serotype 4b (strain CLIP80459).